Reading from the N-terminus, the 136-residue chain is Regulator of nucleoside diphosphate kinase (136 aa).

Belongs to the Rnk family. As to quaternary structure, interacts with the RNA polymerase.

Functionally, may act as an anti-Gre factor. In Escherichia coli O6:H1 (strain CFT073 / ATCC 700928 / UPEC), this protein is Regulator of nucleoside diphosphate kinase.